Reading from the N-terminus, the 798-residue chain is uncharacterized protein (798 aa).

Over residues methionine 1–serine 13 the composition is skewed to low complexity. A chloroplast-targeting transit peptide spans methionine 1–arginine 58. Disordered stretches follow at residues methionine 1–alanine 99, alanine 135–threonine 158, and threonine 417–serine 473. The span at valine 35 to phenylalanine 55 shows a compositional bias: polar residues. Positions valine 57–leucine 79 are enriched in basic and acidic residues. A compositionally biased stretch (basic residues) spans lysine 137–alanine 146. Residues alanine 462–serine 473 show a composition bias toward low complexity. A coiled-coil region spans residues arginine 578–aspartate 658. Positions aspartate 749–aspartate 798 are disordered. Phosphoserine is present on serine 762. Residues lysine 789–aspartate 798 are compositionally biased toward basic and acidic residues.

It is found in the plastid. Its subcellular location is the chloroplast. This is an uncharacterized protein from Arabidopsis thaliana (Mouse-ear cress).